Reading from the N-terminus, the 228-residue chain is 7-cyano-7-deazaguanine synthase (228 aa).

Leucine 7–leucine 17 lines the ATP pocket. Residues cysteine 190, cysteine 202, cysteine 205, and cysteine 208 each contribute to the Zn(2+) site.

It belongs to the QueC family. It depends on Zn(2+) as a cofactor.

It catalyses the reaction 7-carboxy-7-deazaguanine + NH4(+) + ATP = 7-cyano-7-deazaguanine + ADP + phosphate + H2O + H(+). It participates in purine metabolism; 7-cyano-7-deazaguanine biosynthesis. Catalyzes the ATP-dependent conversion of 7-carboxy-7-deazaguanine (CDG) to 7-cyano-7-deazaguanine (preQ(0)). The chain is 7-cyano-7-deazaguanine synthase from Acaryochloris marina (strain MBIC 11017).